The primary structure comprises 393 residues: Ig heavy chain C region (393 aa).

3 Ig-like domains span residues 63–157 (PTVI…RNIT), 168–260 (PVIK…ASIH), and 270–370 (PSVS…RTVN). N-linked (GlcNAc...) asparagine glycosylation is found at N119, N155, N200, N230, N329, N366, N370, and N380.

This chain is Ig heavy chain C region, found in Heterodontus francisci (Horn shark).